The chain runs to 379 residues: Putative acetyl-CoA C-acetyltransferase VraB (379 aa).

C86 (acyl-thioester intermediate) is an active-site residue. H338 acts as the Proton acceptor in catalysis.

Belongs to the thiolase-like superfamily. Thiolase family.

The sequence is that of Putative acetyl-CoA C-acetyltransferase VraB (vraB) from Staphylococcus aureus (strain MSSA476).